The primary structure comprises 1200 residues: SR-related and CTD-associated factor 4 (1200 aa).

The CID domain occupies 1 to 139; it reads MDAVNAFNQE…PLLDMAAGTS (139 aa). At Lys49 the chain carries N6-acetyllysine. A compositionally biased stretch (polar residues) spans 140 to 153; it reads NAAPGAENVTNNEG. 3 disordered regions span residues 140-172, 299-324, and 346-566; these read NAAP…PTNS, VPAS…MQQP, and SMQH…QIKS. The residue at position 154 (Ser154) is a Phosphoserine. Pro residues-rich tracts occupy residues 367–390 and 399–461; these read APPP…PGMP and LPQP…PPVQ. The segment covering 462–471 has biased composition (low complexity); it reads PTFQPTFQPQ. The span at 493 to 503 shows a compositional bias: basic and acidic residues; sequence EVKRHVPESRK. Residues 504–541 are compositionally biased toward basic residues; the sequence is SRSRSPKRRRSRSGSRSRRSRHRRSRSRSRDRRRHSPR. Basic and acidic residues predominate over residues 543–558; the sequence is RSQERRDREKERERRQ. The RRM domain occupies 574-648; it reads TTLWVGQLDK…KSIKIAWALN (75 aa). 3 disordered regions span residues 696–724, 834–875, and 927–1200; these read WKGI…VSPI, VSGA…SLLG, and PPHM…EAPR. Residue Ser722 is modified to Phosphoserine. Pro residues-rich tracts occupy residues 856-868 and 927-958; these read PAAP…PPVT and PPHM…PPHG. Residues 965–978 show a composition bias toward gly residues; the sequence is GMPGLGGPGPGPGG. Residues 986–1036 are compositionally biased toward low complexity; sequence QQQPQQQQQQQQQQQQQQQQQQQQPPPQQSQTQQQPAPSQQPAPAQQQPQQ. Ser1058 carries the post-translational modification Phosphoserine. The span at 1063-1139 shows a compositional bias: basic and acidic residues; it reads VENDRERYGS…RGKEKHEVAD (77 aa). Residues 1153 to 1162 are compositionally biased toward polar residues; sequence QVGNTDTVSE. Ser1178 carries the phosphoserine modification.

Interacts with POLR2A; via C-terminal heptapeptide repeat domain (CTD) phosphorylated at 'Ser-2' and 'Ser-5'.

Its subcellular location is the nucleus. Anti-terminator protein required to prevent early mRNA termination during transcription. Together with SCAF8, acts by suppressing the use of early, alternative poly(A) sites, thereby preventing the accumulation of non-functional truncated proteins. Mechanistically, associates with the phosphorylated C-terminal heptapeptide repeat domain (CTD) of the largest RNA polymerase II subunit (POLR2A), and subsequently binds nascent RNA upstream of early polyadenylation sites to prevent premature mRNA transcript cleavage and polyadenylation. Independently of SCAF8, also acts as a suppressor of transcriptional readthrough. The polypeptide is SR-related and CTD-associated factor 4 (Rattus norvegicus (Rat)).